Here is a 231-residue protein sequence, read N- to C-terminus: Cytochrome c oxidase assembly factor 7 (231 aa).

A2 is modified (N-acetylalanine). 5 Sel1-like repeats span residues 34–66 (PEGC…EKYG), 68–104 (GDSC…EKPG), 108–146 (VESC…DGGY), 147–183 (AASC…DLGH), and 184–219 (VWAC…QLHK).

This sequence belongs to the hcp beta-lactamase family. Interacts with CHCHD4/MIA40 through transient intermolecular disulfide bonds.

It is found in the mitochondrion intermembrane space. In terms of biological role, required for assembly of mitochondrial respiratory chain complex I and complex IV. This Mus musculus (Mouse) protein is Cytochrome c oxidase assembly factor 7 (Coa7).